We begin with the raw amino-acid sequence, 339 residues long: DNA-directed RNA polymerase subunit alpha (339 aa).

The interval 1–233 (MVREEVAGST…DLFLPFLHAE (233 aa)) is alpha N-terminal domain (alpha-NTD). Positions 264-339 (KKGIPLNCIF…IDLLKNKLSF (76 aa)) are alpha C-terminal domain (alpha-CTD).

This sequence belongs to the RNA polymerase alpha chain family. In terms of assembly, in plastids the minimal PEP RNA polymerase catalytic core is composed of four subunits: alpha, beta, beta', and beta''. When a (nuclear-encoded) sigma factor is associated with the core the holoenzyme is formed, which can initiate transcription.

It localises to the plastid. The protein resides in the chloroplast. The catalysed reaction is RNA(n) + a ribonucleoside 5'-triphosphate = RNA(n+1) + diphosphate. Functionally, DNA-dependent RNA polymerase catalyzes the transcription of DNA into RNA using the four ribonucleoside triphosphates as substrates. The protein is DNA-directed RNA polymerase subunit alpha of Festucopsis festucoides.